A 305-amino-acid polypeptide reads, in one-letter code: MSNLPFTVAALYCFAPLPQYESLREPLAQLCCANGIKGTLLLAAEGINGTVAGSAGAIEKLIAHITAIPGLGEPELKYSHASEMPFHRMKVRLKREIVTMGVEGIDPLKSVGTYIAPKDWNALIADENTVVVDTRNDYEYAIGTFEGAIDPQTRTFREFPEWVKQNRDRLEGKKIAMFCTGGIRCEKATAFVKGLGFDDVYHLKGGILKYLEEVPREQSVWNGECFVFDERVAVGHGLAESDVELCRACRRPLTPQDKLSQFFEEGVSCAGCYAERTPEDRARYAERQKQVKLAEKRGANKHIGS.

The Rhodanese domain maps to 125-219 (ADENTVVVDT…YLEEVPREQS (95 aa)). C179 serves as the catalytic Cysteine persulfide intermediate.

The protein belongs to the TrhO family.

It carries out the reaction uridine(34) in tRNA + AH2 + O2 = 5-hydroxyuridine(34) in tRNA + A + H2O. Its function is as follows. Catalyzes oxygen-dependent 5-hydroxyuridine (ho5U) modification at position 34 in tRNAs. This Brucella canis (strain ATCC 23365 / NCTC 10854 / RM-666) protein is tRNA uridine(34) hydroxylase.